The sequence spans 72 residues: DNA-directed RNA polymerase subunit epsilon (72 aa).

This sequence belongs to the RNA polymerase subunit epsilon family. In terms of assembly, RNAP is composed of a core of 2 alpha, a beta and a beta' subunit. The core is associated with a delta subunit, and at least one of epsilon or omega. When a sigma factor is associated with the core the holoenzyme is formed, which can initiate transcription.

The catalysed reaction is RNA(n) + a ribonucleoside 5'-triphosphate = RNA(n+1) + diphosphate. In terms of biological role, a non-essential component of RNA polymerase (RNAP). This is DNA-directed RNA polymerase subunit epsilon from Staphylococcus aureus (strain JH1).